A 20-amino-acid polypeptide reads, in one-letter code: Antimicrobial peptide AJN-10 (20 aa).

The protein resides in the secreted. Functionally, displays antimicrobial activity against the Gram-negative bacterium A.hydrophila. The protein is Antimicrobial peptide AJN-10 of Anguilla japonica (Japanese eel).